The following is an 867-amino-acid chain: Zinc finger protein zfp-1 (867 aa).

A PHD-type 1 zinc finger spans residues 5 to 57 (VGGCCVCADENGWTDNPLIYCDGENCEVAVHQGCYGIQEVPEGEWFCAKCTKA). The C2HC pre-PHD-type 2 zinc finger occupies 69 to 102 (TFCCQLCPFDYGALKKTDRNGWAHVICALYIPEV). The interval 69–186 (TFCCQLCPFD…KYCGYCENHL (118 aa)) is extended PHD2 domain (ePHD2). Residues 125–186 (KLCYICNEER…KYCGYCENHL (62 aa)) form a PHD-type 2 zinc finger. Disordered stretches follow at residues 267–311 (GSTV…SLSS), 440–477 (KNDMMDKTHKRPRANARPPAVLGSMSSGSSGGTVGKSP), 503–586 (ADRT…QSNR), and 753–773 (SSGAPVNSNIQNHRATPSTAG). Residues 285–311 (PLTTSSRSSVAQDPSPPLTINKNSLSS) show a composition bias toward polar residues. Over residues 503–512 (ADRTAAERRA) the composition is skewed to basic and acidic residues. The segment covering 516-527 (QSQPSTSTNGGP) has biased composition (polar residues). Residues 538–550 (HTNSTNSTNHQNN) show a composition bias toward low complexity. Residues 551-573 (GLTQNAPASTSMQAGTSSNDGVI) are compositionally biased toward polar residues. The segment covering 574–585 (SQNGTSSTSQSN) has biased composition (low complexity). The segment covering 758-771 (VNSNIQNHRATPST) has biased composition (polar residues).

As to quaternary structure, multimer; in vitro. Interacts (via C-terminus) with dot-1.1 to form a heterodimer known as the zfp-1-dot-1.1 complex or DotCom complex. In terms of tissue distribution, isoform a: Expressed at high levels in maturing oocytes, but at low levels in the rest of the germ line (at protein level). Isoform a: Not expressed in the pharynx, germ line and tail. Isoform c: Not expressed in the germ line (at protein level). Isoform c: Uniformly expressed.

The protein localises to the nucleus. It localises to the chromosome. Functionally, recruits the histone methyltransferase dot-1.1 to chromatin to methylate 'Lys-79' of histone H3 and activate transcription. Recognizes and binds histone H3 methylated at 'Lys-4' (H3K4me) at the promoters of target genes. During stress, the zfp-1-dot-1.1 complex also plays a role in the deubiquitination of histone H2B sites, which negatively modulates the RNA polymerase II-induced transcription of highly expressed genes. In response to stress, binds to the pdk-1 promoter to negatively regulate pdk-1 expression, which negatively modulates daf-16/FOXO-mediated gene expression. Thus, most likely via this mechanism, in response to stress, it confers a protective role against neuronal necrosis. Plays a role in Insulin/IGF-1-like signaling (IIS)- and diet restriction-mediated lifespan extension by controlling daf-16/FOXO and pha-4/FOXA recruitment to target promoters. May negatively regulate the expression of genes required for vulval development. May play a role in axon guidance in D-type motor neurons. May suppress sensitivity to RNAi. Its function is as follows. Required for migration of HSN motor neurons during embryogenesis. This Caenorhabditis elegans protein is Zinc finger protein zfp-1.